A 195-amino-acid chain; its full sequence is Imidazoleglycerol-phosphate dehydratase (195 aa).

Belongs to the imidazoleglycerol-phosphate dehydratase family.

It is found in the cytoplasm. It carries out the reaction D-erythro-1-(imidazol-4-yl)glycerol 3-phosphate = 3-(imidazol-4-yl)-2-oxopropyl phosphate + H2O. It participates in amino-acid biosynthesis; L-histidine biosynthesis; L-histidine from 5-phospho-alpha-D-ribose 1-diphosphate: step 6/9. The polypeptide is Imidazoleglycerol-phosphate dehydratase (Methanosphaerula palustris (strain ATCC BAA-1556 / DSM 19958 / E1-9c)).